The following is a 1111-amino-acid chain: Phytochrome C (1111 aa).

Residues 213-393 (NMLLLCDALV…VFGVQINKEA (181 aa)) form the GAF domain. C318 contributes to the phytochromobilin binding site. PAS domains lie at 604-674 (IVNE…LEGS) and 737-808 (DYAR…TKLR). Residues 889–1111 (YLRHEVKDPE…FVILTEFPLI (223 aa)) enclose the Histidine kinase domain.

This sequence belongs to the phytochrome family. As to quaternary structure, homodimer. Post-translationally, contains one covalently linked phytochromobilin chromophore.

In terms of biological role, regulatory photoreceptor which exists in two forms that are reversibly interconvertible by light: the Pr form that absorbs maximally in the red region of the spectrum and the Pfr form that absorbs maximally in the far-red region. Photoconversion of Pr to Pfr induces an array of morphogenic responses, whereas reconversion of Pfr to Pr cancels the induction of those responses. Pfr controls the expression of a number of nuclear genes including those encoding the small subunit of ribulose-bisphosphate carboxylase, chlorophyll A/B binding protein, protochlorophyllide reductase, rRNA, etc. It also controls the expression of its own gene(s) in a negative feedback fashion. This Arabidopsis thaliana (Mouse-ear cress) protein is Phytochrome C (PHYC).